We begin with the raw amino-acid sequence, 398 residues long: Tryptophan synthase beta chain (398 aa).

Lys-88 is subject to N6-(pyridoxal phosphate)lysine.

The protein belongs to the TrpB family. Tetramer of two alpha and two beta chains. The cofactor is pyridoxal 5'-phosphate.

The enzyme catalyses (1S,2R)-1-C-(indol-3-yl)glycerol 3-phosphate + L-serine = D-glyceraldehyde 3-phosphate + L-tryptophan + H2O. It participates in amino-acid biosynthesis; L-tryptophan biosynthesis; L-tryptophan from chorismate: step 5/5. Its function is as follows. The beta subunit is responsible for the synthesis of L-tryptophan from indole and L-serine. The chain is Tryptophan synthase beta chain from Haemophilus influenzae (strain PittGG).